Here is a 139-residue protein sequence, read N- to C-terminus: Trafficking protein particle complex subunit 2-like protein (139 aa).

This sequence belongs to the TRAPP small subunits family. Sedlin subfamily.

The protein localises to the cytoplasm. It localises to the perinuclear region. Its subcellular location is the endoplasmic reticulum. It is found in the golgi apparatus. Functionally, may play a role in vesicular transport from endoplasmic reticulum to Golgi. This Xenopus tropicalis (Western clawed frog) protein is Trafficking protein particle complex subunit 2-like protein (trappc2l).